A 162-amino-acid chain; its full sequence is Beta-lactoglobulin-3 (162 aa).

Disulfide bonds link cysteine 66/cysteine 160 and cysteine 106/cysteine 119.

It belongs to the calycin superfamily. Lipocalin family. As to quaternary structure, monomer.

The protein resides in the secreted. Functionally, lactoglobulin is the primary component of whey, it binds retinol and is probably involved in the transport of that molecule. This Felis catus (Cat) protein is Beta-lactoglobulin-3 (LGB3).